Reading from the N-terminus, the 214-residue chain is UPF0502 protein Pput_3252 (214 aa).

This sequence belongs to the UPF0502 family.

In Pseudomonas putida (strain ATCC 700007 / DSM 6899 / JCM 31910 / BCRC 17059 / LMG 24140 / F1), this protein is UPF0502 protein Pput_3252.